Here is a 302-residue protein sequence, read N- to C-terminus: Sulfate adenylyltransferase subunit 2 (302 aa).

The protein belongs to the PAPS reductase family. CysD subfamily. In terms of assembly, heterodimer composed of CysD, the smaller subunit, and CysN.

It catalyses the reaction sulfate + ATP + H(+) = adenosine 5'-phosphosulfate + diphosphate. It participates in sulfur metabolism; hydrogen sulfide biosynthesis; sulfite from sulfate: step 1/3. With CysN forms the ATP sulfurylase (ATPS) that catalyzes the adenylation of sulfate producing adenosine 5'-phosphosulfate (APS) and diphosphate, the first enzymatic step in sulfur assimilation pathway. APS synthesis involves the formation of a high-energy phosphoric-sulfuric acid anhydride bond driven by GTP hydrolysis by CysN coupled to ATP hydrolysis by CysD. The polypeptide is Sulfate adenylyltransferase subunit 2 (Psychromonas ingrahamii (strain DSM 17664 / CCUG 51855 / 37)).